We begin with the raw amino-acid sequence, 310 residues long: Ferredoxin--NADP reductase (310 aa).

Residues D26, Q34, Y39, V78, F108, D268, and T308 each contribute to the FAD site.

It belongs to the ferredoxin--NADP reductase type 2 family. Homodimer. Requires FAD as cofactor.

The catalysed reaction is 2 reduced [2Fe-2S]-[ferredoxin] + NADP(+) + H(+) = 2 oxidized [2Fe-2S]-[ferredoxin] + NADPH. This is Ferredoxin--NADP reductase from Lactobacillus helveticus (strain DPC 4571).